The sequence spans 115 residues: Ig heavy chain V region PJ14 (115 aa).

Positions 1–19 (MAVLALLFCLVTFPSCILS) are cleaved as a signal peptide. An Ig-like domain is found at 20-115 (QVQLKESGPG…TDDTARYYCA (96 aa)).

This Mus musculus (Mouse) protein is Ig heavy chain V region PJ14.